The sequence spans 2157 residues: Genome polyprotein (2157 aa).

Glycine 2 carries N-myristoyl glycine; by host lipidation. The Cytoplasmic portion of the chain corresponds to 2 to 1470 (GAQVSRQNVG…DLNIANSIIA (1469 aa)). The interval 567–584 (PIEQNPVENYIDEVLNEV) is amphipathic alpha-helix. Active-site for protease 2A activity residues include histidine 875 and aspartate 892. Residues cysteine 909 and cysteine 911 each contribute to the Zn(2+) site. Residue cysteine 963 is the For protease 2A activity of the active site. Residues cysteine 969 and histidine 971 each contribute to the Zn(2+) site. The tract at residues 1095–1164 (SDSWLKKFTE…NLRAADSATQ (70 aa)) is membrane-binding. The segment at 1095–1228 (SDSWLKKFTE…PPGTGKSITT (134 aa)) is oligomerization. An RNA-binding region spans residues 1116–1120 (GNKIS). One can recognise an SF3 helicase domain in the interval 1188–1350 (EAKRIKVLYN…YKDTQGKLDV (163 aa)). Zn(2+) contacts are provided by cysteine 1357, cysteine 1368, and cysteine 1373. The C4-type; degenerate zinc finger occupies 1357 to 1373 (CNVNTKIGNAKCCPFVC). The tract at residues 1400 to 1407 (EDKRRRQV) is RNA-binding. The tract at residues 1411–1416 (MSAIFQ) is oligomerization. The stretch at 1471–1486 (IIANIISIAGIIFVIY) is an intramembrane region. Topologically, residues 1487-2157 (KLFCSLQGPY…LLKHEWYEKF (671 aa)) are cytoplasmic. Position 1496 is an O-(5'-phospho-RNA)-tyrosine (tyrosine 1496). The Peptidase C3 domain occupies 1515–1693 (GPEEEFGRSI…FSAMLLRSYF (179 aa)). Residues histidine 1554, glutamate 1585, and cysteine 1661 each act as for protease 3C activity in the active site. The RdRp catalytic domain occupies 1925-2038 (DCIMAFDYTN…SYKYTLDMEA (114 aa)). Aspartate 1931 and aspartate 2024 together coordinate Mg(2+).

It belongs to the picornaviruses polyprotein family. Interacts with capsid protein VP1 and capsid protein VP3 to form heterotrimeric protomers. As to quaternary structure, interacts with capsid protein VP0, and capsid protein VP3 to form heterotrimeric protomers. Five protomers subsequently associate to form pentamers which serve as building blocks for the capsid. Interacts with capsid protein VP2, capsid protein VP3 and capsid protein VP4 following cleavage of capsid protein VP0. In terms of assembly, interacts with capsid protein VP1 and capsid protein VP3 in the mature capsid. Interacts with capsid protein VP0 and capsid protein VP1 to form heterotrimeric protomers. Five protomers subsequently associate to form pentamers which serve as building blocks for the capsid. Interacts with capsid protein VP4 in the mature capsid. Interacts with protein 2C; this interaction may be important for virion morphogenesis. As to quaternary structure, interacts with capsid protein VP1 and capsid protein VP3. In terms of assembly, homodimer. Homohexamer; forms a hexameric ring structure with 6-fold symmetry characteristic of AAA+ ATPases. Interacts (via N-terminus) with host RTN3 (via reticulon domain); this interaction is important for viral replication. Interacts with capsid protein VP3; this interaction may be important for virion morphogenesis. As to quaternary structure, interacts with protein 3CD. In terms of assembly, homodimer. Interacts with host GBF1. Interacts (via GOLD domain) with host ACBD3 (via GOLD domain); this interaction allows the formation of a viral protein 3A/ACBD3 heterotetramer with a 2:2 stoichiometry, which will stimulate the recruitment of host PI4KB in order to synthesize PI4P at the viral RNA replication sites. Interacts with RNA-directed RNA polymerase. As to quaternary structure, interacts with protein 3AB and with RNA-directed RNA polymerase. In terms of assembly, interacts with Viral protein genome-linked and with protein 3CD. The cofactor is Mg(2+). Post-translationally, specific enzymatic cleavages in vivo by the viral proteases yield processing intermediates and the mature proteins. Myristoylation is required for the formation of pentamers during virus assembly. Further assembly of 12 pentamers and a molecule of genomic RNA generates the provirion. In terms of processing, during virion maturation, immature virions are rendered infectious following cleavage of VP0 into VP4 and VP2. This maturation seems to be an autocatalytic event triggered by the presence of RNA in the capsid and it is followed by a conformational change infectious virion. Post-translationally, myristoylation is required during RNA encapsidation and formation of the mature virus particle. VPg is uridylylated by the polymerase into VPg-pUpU. This acts as a nucleotide-peptide primer for the genomic RNA replication.

Its subcellular location is the virion. The protein resides in the host cytoplasm. The protein localises to the host cytoplasmic vesicle membrane. It is found in the host nucleus. The catalysed reaction is a ribonucleoside 5'-triphosphate + H2O = a ribonucleoside 5'-diphosphate + phosphate + H(+). It carries out the reaction Selective cleavage of Tyr-|-Gly bond in the picornavirus polyprotein.. The enzyme catalyses RNA(n) + a ribonucleoside 5'-triphosphate = RNA(n+1) + diphosphate. It catalyses the reaction Selective cleavage of Gln-|-Gly bond in the poliovirus polyprotein. In other picornavirus reactions Glu may be substituted for Gln, and Ser or Thr for Gly.. Replication or transcription is subject to high level of random mutations by the nucleotide analog ribavirin. In terms of biological role, forms an icosahedral capsid of pseudo T=3 symmetry with capsid proteins VP2 and VP3. The capsid is 300 Angstroms in diameter, composed of 60 copies of each capsid protein and enclosing the viral positive strand RNA genome. Capsid protein VP1 mainly forms the vertices of the capsid. Capsid protein VP1 interacts with host cell receptor to provide virion attachment to target host cells. This attachment induces virion internalization. Tyrosine kinases are probably involved in the entry process. After binding to its receptor, the capsid undergoes conformational changes. Capsid protein VP1 N-terminus (that contains an amphipathic alpha-helix) and capsid protein VP4 are externalized. Together, they shape a pore in the host membrane through which viral genome is translocated to host cell cytoplasm. Functionally, forms an icosahedral capsid of pseudo T=3 symmetry with capsid proteins VP2 and VP3. The capsid is 300 Angstroms in diameter, composed of 60 copies of each capsid protein and enclosing the viral positive strand RNA genome. Lies on the inner surface of the capsid shell. After binding to the host receptor, the capsid undergoes conformational changes. Capsid protein VP4 is released, Capsid protein VP1 N-terminus is externalized, and together, they shape a pore in the host membrane through which the viral genome is translocated into the host cell cytoplasm. Its function is as follows. Component of immature procapsids, which is cleaved into capsid proteins VP4 and VP2 after maturation. Allows the capsid to remain inactive before the maturation step. In terms of biological role, cysteine protease that cleaves viral polyprotein and specific host proteins. It is responsible for the autocatalytic cleavage between the P1 and P2 regions, which is the first cleavage occurring in the polyprotein. Also cleaves the host translation initiation factor EIF4G1, in order to shut down the capped cellular mRNA translation. Inhibits the host nucleus-cytoplasm protein and RNA trafficking by cleaving host members of the nuclear pores. Counteracts stress granule formation probably by antagonizing its assembly or promoting its dissassembly. Functionally, plays an essential role in the virus replication cycle by acting as a viroporin. Creates a pore in the host endoplasmic reticulum and as a consequence releases Ca2+ in the cytoplasm of infected cell. In turn, high levels of cytoplasmic calcium may trigger membrane trafficking and transport of viral ER-associated proteins to viroplasms, sites of viral genome replication. Induces and associates with structural rearrangements of intracellular membranes. Displays RNA-binding, nucleotide binding and NTPase activities. May play a role in virion morphogenesis and viral RNA encapsidation by interacting with the capsid protein VP3. Its function is as follows. Localizes the viral replication complex to the surface of membranous vesicles. Together with protein 3CD binds the Cis-Active RNA Element (CRE) which is involved in RNA synthesis initiation. Acts as a cofactor to stimulate the activity of 3D polymerase, maybe through a nucleid acid chaperone activity. In terms of biological role, localizes the viral replication complex to the surface of membranous vesicles. It inhibits host cell endoplasmic reticulum-to-Golgi apparatus transport and causes the disassembly of the Golgi complex, possibly through GBF1 interaction. This would result in depletion of MHC, trail receptors and IFN receptors at the host cell surface. Plays an essential role in viral RNA replication by recruiting ACBD3 and PI4KB at the viral replication sites, thereby allowing the formation of the rearranged membranous structures where viral replication takes place. Functionally, acts as a primer for viral RNA replication and remains covalently bound to viral genomic RNA. VPg is uridylylated prior to priming replication into VPg-pUpU. The oriI viral genomic sequence may act as a template for this. The VPg-pUpU is then used as primer on the genomic RNA poly(A) by the RNA-dependent RNA polymerase to replicate the viral genome. During genome replication, the VPg-RNA linkage is removed by the host TDP2, thereby accelerating replication. During the late stage of the replication cycle, host TDP2 is excluded from sites of viral RNA synthesis and encapsidation, allowing for the generation of progeny virions. Involved in the viral replication complex and viral polypeptide maturation. It exhibits protease activity with a specificity and catalytic efficiency that is different from protease 3C. Protein 3CD lacks polymerase activity. Protein 3CD binds to the 5'UTR of the viral genome. Its function is as follows. Major viral protease that mediates proteolytic processing of the polyprotein. Cleaves host EIF5B, contributing to host translation shutoff. Also cleaves host PABPC1, contributing to host translation shutoff. In terms of biological role, replicates the viral genomic RNA on the surface of intracellular membranes. May form linear arrays of subunits that propagate along a strong head-to-tail interaction called interface-I. Covalently attaches UMP to a tyrosine of VPg, which is used to prime RNA synthesis. The positive stranded RNA genome is first replicated at virus induced membranous vesicles, creating a dsRNA genomic replication form. This dsRNA is then used as template to synthesize positive stranded RNA genomes. ss(+)RNA genomes are either translated, replicated or encapsidated. This Homo sapiens (Human) protein is Genome polyprotein.